Consider the following 502-residue polypeptide: Maturase K (502 aa).

This sequence belongs to the intron maturase 2 family. MatK subfamily.

The protein localises to the plastid. Its subcellular location is the chloroplast. In terms of biological role, usually encoded in the trnK tRNA gene intron. Probably assists in splicing its own and other chloroplast group II introns. The protein is Maturase K of Theobroma cacao (Cacao).